Reading from the N-terminus, the 501-residue chain is Dynein regulatory complex subunit 5 (501 aa).

The segment covering 1–23 has biased composition (polar residues); the sequence is MQDTVTTSALLDPSHSSVSTQDN. Disordered stretches follow at residues 1-56 and 202-222; these read MQDT…HPRA and LPAQLRPGDQSDSGSEGEMEE. Residues 24–34 are compositionally biased toward low complexity; the sequence is SSTGGHTSSTS. 5 LRR repeats span residues 308-321, 335-355, 363-383, 391-411, and 419-439; these read VLEELDLSQNLIGD, RLRVLNLANNQVRAPGAQSLA, NLISLNLRLNCIEDEGGQALA, CLTTLHLGGNELSEPTATLLS, and TLTSINLSCNHIGLDGGKQLL.

This sequence belongs to the DRC5 family. As to quaternary structure, component of the nexin-dynein regulatory complex (N-DRC). Interacts with DRC1. Interacts with FBXL13/DRC6, DRC3 and DRC7.

It is found in the cell projection. It localises to the cilium. The protein localises to the flagellum. The protein resides in the cytoplasm. Its subcellular location is the cytoskeleton. It is found in the flagellum axoneme. Component of the nexin-dynein regulatory complex (N-DRC) a key regulator of ciliary/flagellar motility which maintains the alignment and integrity of the distal axoneme and regulates microtubule sliding in motile axonemes. May play a role in the assembly of N-DRC. May be required for sperm motility. The sequence is that of Dynein regulatory complex subunit 5 (TCTE1) from Homo sapiens (Human).